The chain runs to 546 residues: Chaperonin GroEL (546 aa).

ATP contacts are provided by residues 30 to 33 (TMGP), lysine 51, 87 to 91 (DGTTT), glycine 415, 478 to 480 (NAA), and aspartate 494.

The protein belongs to the chaperonin (HSP60) family. In terms of assembly, forms a cylinder of 14 subunits composed of two heptameric rings stacked back-to-back. Interacts with the co-chaperonin GroES.

Its subcellular location is the cytoplasm. It catalyses the reaction ATP + H2O + a folded polypeptide = ADP + phosphate + an unfolded polypeptide.. In terms of biological role, together with its co-chaperonin GroES, plays an essential role in assisting protein folding. The GroEL-GroES system forms a nano-cage that allows encapsulation of the non-native substrate proteins and provides a physical environment optimized to promote and accelerate protein folding. This Wolinella succinogenes (strain ATCC 29543 / DSM 1740 / CCUG 13145 / JCM 31913 / LMG 7466 / NCTC 11488 / FDC 602W) (Vibrio succinogenes) protein is Chaperonin GroEL.